The sequence spans 333 residues: Geminin coiled-coil domain-containing protein 1 (333 aa).

Residues Gln83–Thr118 adopt a coiled-coil conformation. Basic residues predominate over residues Lys145–Arg154. Residues Lys145–Thr165 form a disordered region.

This sequence belongs to the GEMC1 family. Post-translationally, highly phosphorylated by CDK2; stimulates initiation of DNA replication.

The protein resides in the nucleus. Its function is as follows. Regulator of DNA replication. Promotes initiation of chromosomal DNA replication by mediating TOPBP1- and CDK2-dependent recruitment of CDC45L onto replication origins. The protein is Geminin coiled-coil domain-containing protein 1 (Gmnc) of Mus musculus (Mouse).